Here is an 881-residue protein sequence, read N- to C-terminus: MAKKTTPMMEQYQKVKDQYPDAFLFYRLGDFYELFNDDAVKGAQLLELTLTTRNHSAKNPIPMCGVPHRAVNNYIDILIDKGYKVAICEQMEDPKKAKGMVKRAVTRLITPGTQMDLNGEQARDNNYLAAISGQNGVFSIAYTDLSTGELKTTSLNNANDAVNELVNLQSKEVVVDGELPVEITTQFKQRNILQSHQPTVLKNAEISYLTQDLDDQAQQHVVALLVSYLLTTQKRSLAHMQKAIAYQPSSFMKIDHYSKTNLELMRNMRSGKRQGTLAWLLDETKTAMGSRLLKRWIDRPLINQNAISERQDKVQELLDHYFERSNLQQELIKVYDLERLAGRVAYGSVNGRDLIQLKTSLKQVPKIKYVLETLDSPVFEELQKQLDPLDDVADLIDQSIIEEPPIAVTEGGVIKDGYNDQLDQYRDAMNNGKQWIVDLQEHERKLTGINNLKIGYNHVFGYYIEVTKVNLDKLPKDRYERKQTLVNAERFSTPELKEKEALIMGAQEKSTALEYDIFVKIREQVKGQITRLQKLAQQLAELDVLQSFAVVSEDYHFVRPEMNTGHVLKIKDGRHPVVEKFMGHQEYVPNDVLMGEDTDILLITGPNMSGKSTYMRQLALIAVMAQIGCFVPAKSAELPIFDQVFTRIGAADDLISGESTFMVEMMEANNALTHATDRSLILFDEIGRGTATYDGMALAQAIIEYVHQHVRAKTLFSTHYHELTALENSLARLKNVHVGATEKDGELVFLHKVSAGPADKSYGIHVAKLAGMPSSLLKRADTILQKLEQKDVKLPNTPKPATDNYHTEPISAKINEAAPVKKEAAPVVEDNGQLELFATQPEKKESSVDRRILHQLKELNLMGMTPMDVMNQIYKWQQKLK.

605–612 (GPNMSGKS) lines the ATP pocket.

Belongs to the DNA mismatch repair MutS family.

This protein is involved in the repair of mismatches in DNA. It is possible that it carries out the mismatch recognition step. This protein has a weak ATPase activity. The polypeptide is DNA mismatch repair protein MutS (Limosilactobacillus reuteri subsp. reuteri (strain JCM 1112) (Lactobacillus reuteri)).